The sequence spans 225 residues: MSSLHKFKAYFGMVPLDDYEDEYLDEPEPTRRPARPARDSGRDPYHDRDDRDFAEPAFSKAAYAPGRRDDLDDDFDRYESPRHSSRVEPVAVRSARPSASGAVRGSTRGALAVDTRSDRVESRRGPLFDEGGPLSKITTLRPRDYGEARTIGERFRDGTPVIMDLVEMSNADAKRLVDFAAGLAFALRGSFDKVATKVFLLSPADIDVSAEERRRIAETGFYSQK.

The tract at residues 21 to 134 (DEYLDEPEPT…GPLFDEGGPL (114 aa)) is disordered. Basic and acidic residues-rich tracts occupy residues 28–54 (EPTRRPARPARDSGRDPYHDRDDRDFA), 77–86 (RYESPRHSSR), and 115–127 (TRSDRVESRRGPL).

Belongs to the SepF family. In terms of assembly, homodimer. Interacts with FtsZ.

The protein localises to the cytoplasm. Cell division protein that is part of the divisome complex and is recruited early to the Z-ring. Probably stimulates Z-ring formation, perhaps through the cross-linking of FtsZ protofilaments. Its function overlaps with FtsA. In Rhodococcus opacus (strain B4), this protein is Cell division protein SepF.